Here is a 201-residue protein sequence, read N- to C-terminus: uncharacterized protein (201 aa).

Its function is as follows. May have a role in tissue tropism within the insect larvae. This is an uncharacterized protein from Lepidoptera (butterflies and moths).